We begin with the raw amino-acid sequence, 409 residues long: Arginine deiminase (409 aa).

Residue Cys398 is the Amidino-cysteine intermediate of the active site.

Belongs to the arginine deiminase family.

It is found in the cytoplasm. The catalysed reaction is L-arginine + H2O = L-citrulline + NH4(+). Its pathway is amino-acid degradation; L-arginine degradation via ADI pathway; carbamoyl phosphate from L-arginine: step 1/2. This chain is Arginine deiminase, found in Metamycoplasma arthritidis (strain 158L3-1) (Mycoplasma arthritidis).